Reading from the N-terminus, the 94-residue chain is MTKRTKKVGVTGKYGVRYGASLRRDVRKIEVQQHSRYQCPFCGRLTVKRTAAGIWKCSGKGCSKTLAGGAWTVTTAAATSARSTIRRLREMVEV.

A C4-type zinc finger spans residues 39–62; the sequence is CPFCGRLTVKRTAAGIWKCSGKGC.

Belongs to the eukaryotic ribosomal protein eL43 family. As to quaternary structure, component of the large ribosomal subunit (LSU). Mature yeast ribosomes consist of a small (40S) and a large (60S) subunit. The 40S small subunit contains 1 molecule of ribosomal RNA (18S rRNA) and at least 33 different proteins. The large 60S subunit contains 3 rRNA molecules (25S, 5.8S and 5S rRNA) and at least 46 different proteins.

The protein resides in the cytoplasm. Its function is as follows. Component of the ribosome, a large ribonucleoprotein complex responsible for the synthesis of proteins in the cell. The small ribosomal subunit (SSU) binds messenger RNAs (mRNAs) and translates the encoded message by selecting cognate aminoacyl-transfer RNA (tRNA) molecules. The large subunit (LSU) contains the ribosomal catalytic site termed the peptidyl transferase center (PTC), which catalyzes the formation of peptide bonds, thereby polymerizing the amino acids delivered by tRNAs into a polypeptide chain. The nascent polypeptides leave the ribosome through a tunnel in the LSU and interact with protein factors that function in enzymatic processing, targeting, and the membrane insertion of nascent chains at the exit of the ribosomal tunnel. The protein is Large ribosomal subunit protein eL43B (rpl4302) of Schizosaccharomyces pombe (strain 972 / ATCC 24843) (Fission yeast).